Reading from the N-terminus, the 406-residue chain is Arginine deiminase (406 aa).

The active-site Amidino-cysteine intermediate is the cysteine 396.

This sequence belongs to the arginine deiminase family.

The protein resides in the cytoplasm. It carries out the reaction L-arginine + H2O = L-citrulline + NH4(+). It participates in amino-acid degradation; L-arginine degradation via ADI pathway; carbamoyl phosphate from L-arginine: step 1/2. The polypeptide is Arginine deiminase (Aliivibrio fischeri (strain MJ11) (Vibrio fischeri)).